A 235-amino-acid polypeptide reads, in one-letter code: Leucyl/phenylalanyl-tRNA--protein transferase (235 aa).

This sequence belongs to the L/F-transferase family.

It localises to the cytoplasm. It carries out the reaction N-terminal L-lysyl-[protein] + L-leucyl-tRNA(Leu) = N-terminal L-leucyl-L-lysyl-[protein] + tRNA(Leu) + H(+). The catalysed reaction is N-terminal L-arginyl-[protein] + L-leucyl-tRNA(Leu) = N-terminal L-leucyl-L-arginyl-[protein] + tRNA(Leu) + H(+). The enzyme catalyses L-phenylalanyl-tRNA(Phe) + an N-terminal L-alpha-aminoacyl-[protein] = an N-terminal L-phenylalanyl-L-alpha-aminoacyl-[protein] + tRNA(Phe). Functions in the N-end rule pathway of protein degradation where it conjugates Leu, Phe and, less efficiently, Met from aminoacyl-tRNAs to the N-termini of proteins containing an N-terminal arginine or lysine. In Methylococcus capsulatus (strain ATCC 33009 / NCIMB 11132 / Bath), this protein is Leucyl/phenylalanyl-tRNA--protein transferase.